The primary structure comprises 79 residues: uncharacterized protein (79 aa).

Residues 15–37 (KSIVSVLALTSLGCGVFVISATA) traverse the membrane as a helical segment.

It is found in the membrane. This is an uncharacterized protein from Dictyostelium discoideum (Social amoeba).